Consider the following 420-residue polypeptide: DNA primase small subunit (420 aa).

Met-1 bears the N-acetylmethionine mark. Catalysis depends on residues Glu-44, Asp-109, and Asp-111. Mg(2+) is bound by residues Asp-109 and Asp-111. Residues Asp-109 and Asp-111 each coordinate Mn(2+). 109-111 (DID) is a binding site for a ribonucleoside 5'-triphosphate. Zn(2+)-binding residues include Cys-121, Cys-122, Cys-128, and Cys-131. A Zinc knuckle motif motif is present at residues 121-131 (CCSSADICPKC). 160-166 (SGRRGVH) is a binding site for a ribonucleoside 5'-triphosphate. Asp-306 lines the Mg(2+) pocket. Position 306 (Asp-306) interacts with Mn(2+). A ribonucleoside 5'-triphosphate contacts are provided by residues 315-318 (HLLK) and His-324. Over residues 363–373 (NEEEKEENEAE) the composition is skewed to acidic residues. Residues 363-382 (NEEEKEENEAESDVKHRTRD) are disordered.

This sequence belongs to the eukaryotic-type primase small subunit family. Heterodimer of a catalytic subunit PRIM1 and a regulatory subunit PRIM2, also known as the DNA primase complex. Interacts with PRIM2 (via C-terminus). Component of the alpha DNA polymerase complex (also known as the alpha DNA polymerase-primase complex) consisting of four subunits: the catalytic subunit POLA1, the regulatory subunit POLA2, and the primase complex subunits PRIM1 and PRIM2 respectively. Within the complex, POLA1 directly interacts with PRIM2. Mg(2+) serves as cofactor. Requires Mn(2+) as cofactor.

It catalyses the reaction ssDNA + n NTP = ssDNA/pppN(pN)n-1 hybrid + (n-1) diphosphate.. The presence of the regulatory subunit PRIM2/p58 accelerates the kinetics of initiation and primer extension. Inhibited by arabinose nucleoside derivatives such as fludarabine and vidarabine. In terms of biological role, catalytic subunit of the DNA primase complex and component of the DNA polymerase alpha complex (also known as the alpha DNA polymerase-primase complex - primosome/replisome) which play an essential role in the initiation of DNA synthesis. During the S phase of the cell cycle, the DNA polymerase alpha complex (composed of a catalytic subunit POLA1, an accessory subunit POLA2 and two primase subunits, the catalytic subunit PRIM1 and the regulatory subunit PRIM2) is recruited to DNA at the replicative forks via direct interactions with MCM10 and WDHD1. The primase subunit of the polymerase alpha complex initiates DNA synthesis by oligomerising short RNA primers on both leading and lagging strands. These primers are initially extended by the polymerase alpha catalytic subunit and subsequently transferred to polymerase delta and polymerase epsilon for processive synthesis on the lagging and leading strand, respectively. In the primase complex, both subunits are necessary for the initial di-nucleotide formation, but the extension of the primer depends only on the catalytic subunit. Synthesizes 9-mer RNA primers (also known as the 'unit length' RNA primers). Incorporates only ribonucleotides in the presence of ribo- and deoxy-nucleotide triphosphates (rNTPs, dNTPs). Requires template thymine or cytidine to start the RNA primer synthesis, with an adenine or guanine at its 5'-end. Binds single stranded DNA. In Homo sapiens (Human), this protein is DNA primase small subunit (PRIM1).